The following is a 364-amino-acid chain: tRNA 2-selenouridine synthase (364 aa).

Residues 14-137 (LLADTPLIDV…LRQTAIQATW (124 aa)) form the Rhodanese domain. Cys-97 serves as the catalytic S-selanylcysteine intermediate.

Belongs to the SelU family. Monomer.

The catalysed reaction is 5-methylaminomethyl-2-thiouridine(34) in tRNA + selenophosphate + (2E)-geranyl diphosphate + H2O + H(+) = 5-methylaminomethyl-2-selenouridine(34) in tRNA + (2E)-thiogeraniol + phosphate + diphosphate. It carries out the reaction 5-methylaminomethyl-2-thiouridine(34) in tRNA + (2E)-geranyl diphosphate = 5-methylaminomethyl-S-(2E)-geranyl-thiouridine(34) in tRNA + diphosphate. It catalyses the reaction 5-methylaminomethyl-S-(2E)-geranyl-thiouridine(34) in tRNA + selenophosphate + H(+) = 5-methylaminomethyl-2-(Se-phospho)selenouridine(34) in tRNA + (2E)-thiogeraniol. The enzyme catalyses 5-methylaminomethyl-2-(Se-phospho)selenouridine(34) in tRNA + H2O = 5-methylaminomethyl-2-selenouridine(34) in tRNA + phosphate. Functionally, involved in the post-transcriptional modification of the uridine at the wobble position (U34) of tRNA(Lys), tRNA(Glu) and tRNA(Gln). Catalyzes the conversion of 2-thiouridine (S2U-RNA) to 2-selenouridine (Se2U-RNA). Acts in a two-step process involving geranylation of 2-thiouridine (S2U) to S-geranyl-2-thiouridine (geS2U) and subsequent selenation of the latter derivative to 2-selenouridine (Se2U) in the tRNA chain. The chain is tRNA 2-selenouridine synthase from Salmonella enteritidis.